A 598-amino-acid chain; its full sequence is Aspartate--tRNA(Asp/Asn) ligase (598 aa).

Position 172 (glutamate 172) interacts with L-aspartate. An aspartate region spans residues 196–199 (QLFK). Arginine 218 lines the L-aspartate pocket. ATP-binding positions include 218-220 (RDE) and glutamine 227. Residue histidine 455 coordinates L-aspartate. Glutamate 489 lines the ATP pocket. Arginine 496 lines the L-aspartate pocket. ATP is bound at residue 541-544 (GLDR).

Belongs to the class-II aminoacyl-tRNA synthetase family. Type 1 subfamily. In terms of assembly, homodimer.

It is found in the cytoplasm. The enzyme catalyses tRNA(Asx) + L-aspartate + ATP = L-aspartyl-tRNA(Asx) + AMP + diphosphate. Functionally, aspartyl-tRNA synthetase with relaxed tRNA specificity since it is able to aspartylate not only its cognate tRNA(Asp) but also tRNA(Asn). Reaction proceeds in two steps: L-aspartate is first activated by ATP to form Asp-AMP and then transferred to the acceptor end of tRNA(Asp/Asn). The protein is Aspartate--tRNA(Asp/Asn) ligase of Burkholderia mallei (strain ATCC 23344).